We begin with the raw amino-acid sequence, 135 residues long: Small ribosomal subunit protein bS6 (135 aa).

The interval 96–135 (HAEGPSIQMQKRDERERGDRGDRSDRGDRGDRGDRGGFRR) is disordered. The segment covering 105–135 (QKRDERERGDRGDRSDRGDRGDRGDRGGFRR) has biased composition (basic and acidic residues).

The protein belongs to the bacterial ribosomal protein bS6 family.

Functionally, binds together with bS18 to 16S ribosomal RNA. The protein is Small ribosomal subunit protein bS6 of Cereibacter sphaeroides (strain ATCC 17029 / ATH 2.4.9) (Rhodobacter sphaeroides).